The primary structure comprises 101 residues: Small ribosomal subunit protein uS10 (101 aa).

It belongs to the universal ribosomal protein uS10 family. As to quaternary structure, part of the 30S ribosomal subunit.

Involved in the binding of tRNA to the ribosomes. The sequence is that of Small ribosomal subunit protein uS10 from Brachyspira hyodysenteriae (Treponema hyodysenteriae).